Consider the following 435-residue polypeptide: ATP-dependent protease ATPase subunit HslU (435 aa).

Residues Ile18, 60 to 65 (GVGKTE), Asp248, Glu313, and Arg385 contribute to the ATP site.

The protein belongs to the ClpX chaperone family. HslU subfamily. As to quaternary structure, a double ring-shaped homohexamer of HslV is capped on each side by a ring-shaped HslU homohexamer. The assembly of the HslU/HslV complex is dependent on binding of ATP.

The protein resides in the cytoplasm. In terms of biological role, ATPase subunit of a proteasome-like degradation complex; this subunit has chaperone activity. The binding of ATP and its subsequent hydrolysis by HslU are essential for unfolding of protein substrates subsequently hydrolyzed by HslV. HslU recognizes the N-terminal part of its protein substrates and unfolds these before they are guided to HslV for hydrolysis. The sequence is that of ATP-dependent protease ATPase subunit HslU from Rhizobium leguminosarum bv. trifolii (strain WSM2304).